The following is a 103-amino-acid chain: Nucleoid-associated protein Adeh_3636 (103 aa).

This sequence belongs to the YbaB/EbfC family. Homodimer.

It is found in the cytoplasm. The protein resides in the nucleoid. Its function is as follows. Binds to DNA and alters its conformation. May be involved in regulation of gene expression, nucleoid organization and DNA protection. This Anaeromyxobacter dehalogenans (strain 2CP-C) protein is Nucleoid-associated protein Adeh_3636.